We begin with the raw amino-acid sequence, 208 residues long: Probable very-long-chain (3R)-3-hydroxyacyl-CoA dehydratase (208 aa).

The Cytoplasmic portion of the chain corresponds to 1-11; it reads MSKILKIQYLK. The chain crosses the membrane as a helical span at residues 12–35; sequence LYNVISCFLWMSVLLRTGLIWGIT. Residues 36-46 lie on the Lumenal side of the membrane; the sequence is KDTAVVFHETN. The helical transmembrane segment at 47–67 threads the bilayer; the sequence is TLVRWVQTLAIAEVFHSIFGL. The Cytoplasmic portion of the chain corresponds to 68–78; sequence VSSSPLTTIIQ. A helical transmembrane segment spans residues 79-97; that stretch reads VASRLYLVWGVCYPFSYVI. Topologically, residues 98–102 are lumenal; the sequence is EGSPI. A helical transmembrane segment spans residues 103 to 123; the sequence is YLSMIIAWSITEIIRYAFYAF. Residues 124-134 are Cytoplasmic-facing; the sequence is NLNGDIPAFLT. A helical membrane pass occupies residues 135–157; it reads WLRYNTFLILYPIGAGSEFLLVL. Catalysis depends on residues Tyr-145 and Glu-152. Residues 158–171 lie on the Lumenal side of the membrane; sequence KSRIAAQYVWSLNK. The chain crosses the membrane as a helical span at residues 172 to 192; sequence LLWPILMSIYPPGLYIMYTHM. Residues 193–208 lie on the Cytoplasmic side of the membrane; the sequence is LAQRRKISKRAAARRT.

This sequence belongs to the very long-chain fatty acids dehydratase HACD family.

It localises to the endoplasmic reticulum membrane. The enzyme catalyses a very-long-chain (3R)-3-hydroxyacyl-CoA = a very-long-chain (2E)-enoyl-CoA + H2O. Its pathway is lipid metabolism; fatty acid biosynthesis. Its function is as follows. Catalyzes the third of the four reactions of the long-chain fatty acids elongation cycle. This endoplasmic reticulum-bound enzymatic process, allows the addition of two carbons to the chain of long- and very long-chain fatty acids/VLCFAs per cycle. This enzyme catalyzes the dehydration of the 3-hydroxyacyl-CoA intermediate into trans-2,3-enoyl-CoA, within each cycle of fatty acid elongation. Thereby, it participates in the production of VLCFAs of different chain lengths that are involved in multiple biological processes as precursors of membrane lipids and lipid mediators. This Schizosaccharomyces pombe (strain 972 / ATCC 24843) (Fission yeast) protein is Probable very-long-chain (3R)-3-hydroxyacyl-CoA dehydratase.